Reading from the N-terminus, the 323-residue chain is uncharacterized protein (323 aa).

A run of 3 helical transmembrane segments spans residues 8-28 (FLVI…MFME), 32-52 (LTLL…PFSL), and 92-112 (ITIF…CGIF).

It is found in the mitochondrion membrane. This is an uncharacterized protein from Neurospora crassa (strain ATCC 24698 / 74-OR23-1A / CBS 708.71 / DSM 1257 / FGSC 987).